Consider the following 146-residue polypeptide: Kappa-casein (146 aa).

3 O-linked (GalNAc...) threonine glycosylation sites follow: Thr-107, Thr-112, and Thr-118. Phosphoserine is present on Ser-143.

This sequence belongs to the kappa-casein family. Mammary gland specific. Secreted in milk.

It is found in the secreted. Its function is as follows. Kappa-casein stabilizes micelle formation, preventing casein precipitation in milk. The chain is Kappa-casein (CSN3) from Dicotyles tajacu (Collared peccary).